The sequence spans 198 residues: B9 domain-containing protein 1 (198 aa).

A C2 B9-type domain is found at 8–126 (FLLNVSGQIE…TIPMFVPESS (119 aa)).

This sequence belongs to the B9D family. In terms of assembly, part of the tectonic-like complex (also named B9 complex).

Its subcellular location is the cytoplasm. The protein resides in the cytoskeleton. It localises to the cilium basal body. Its function is as follows. Component of the tectonic-like complex, a complex localized at the transition zone of primary cilia and acting as a barrier that prevents diffusion of transmembrane proteins between the cilia and plasma membranes. Required for ciliogenesis and sonic hedgehog/SHH signaling. This Xenopus laevis (African clawed frog) protein is B9 domain-containing protein 1 (b9d1).